Here is a 124-residue protein sequence, read N- to C-terminus: uncharacterized protein (124 aa).

This protein may be involved in virus assembly. This is an uncharacterized protein from Sulfolobus spindle-shape virus 1 (SSV1).